Here is a 284-residue protein sequence, read N- to C-terminus: 2,3,4,5-tetrahydropyridine-2,6-dicarboxylate N-succinyltransferase (284 aa).

Positions 111 and 148 each coordinate substrate.

This sequence belongs to the transferase hexapeptide repeat family. Homotrimer.

The protein localises to the cytoplasm. The catalysed reaction is (S)-2,3,4,5-tetrahydrodipicolinate + succinyl-CoA + H2O = (S)-2-succinylamino-6-oxoheptanedioate + CoA. It functions in the pathway amino-acid biosynthesis; L-lysine biosynthesis via DAP pathway; LL-2,6-diaminopimelate from (S)-tetrahydrodipicolinate (succinylase route): step 1/3. This Brucella anthropi (strain ATCC 49188 / DSM 6882 / CCUG 24695 / JCM 21032 / LMG 3331 / NBRC 15819 / NCTC 12168 / Alc 37) (Ochrobactrum anthropi) protein is 2,3,4,5-tetrahydropyridine-2,6-dicarboxylate N-succinyltransferase.